The following is a 274-amino-acid chain: tRNA (mnm(5)s(2)U34)-methyltransferase, chloroplastic (274 aa).

The transit peptide at 1–50 (MAAGFFQAEMSILSSTLARSYSLPIRKTLMTFDFRIAMQRNPCLRIRRSC) directs the protein to the chloroplast. Residues Asn-108, Asn-110, Asp-134, Gln-136, and His-166 each coordinate S-adenosyl-L-methionine.

Belongs to the methyltransferase superfamily. MnmM family.

The protein resides in the plastid. It localises to the chloroplast. The enzyme catalyses 5-aminomethyl-2-thiouridine(34) in tRNA + S-adenosyl-L-methionine = 5-methylaminomethyl-2-thiouridine(34) in tRNA + S-adenosyl-L-homocysteine + H(+). It functions in the pathway tRNA modification. In terms of biological role, involved in the biosynthesis of 5-methylaminomethyl-2-thiouridine (mnm(5)s(2)U) at the wobble position (U34) in tRNA. Catalyzes the transfer of a methyl group from S-adenosyl-L-methionine to nm(5)s(2)U34 to form mnm(5)s(2)U34. The chain is tRNA (mnm(5)s(2)U34)-methyltransferase, chloroplastic from Arabidopsis thaliana (Mouse-ear cress).